The sequence spans 212 residues: Interleukin-6 (212 aa).

A signal peptide spans 1–29 (MTSFSTSAFRPVAFSLGLLLVMPAAFPAP). C72 and C78 are joined by a disulfide. N73 carries an N-linked (GlcNAc...) asparagine glycan. S81 carries the phosphoserine modification. The cysteines at positions 101 and 111 are disulfide-linked. 2 N-linked (GlcNAc...) asparagine glycosylation sites follow: N160 and N172.

The protein belongs to the IL-6 superfamily. Component of a hexamer of two molecules each of IL6, IL6R and IL6ST; first binds to IL6R to associate with the signaling subunit IL6ST. Interacts with IL6R (via the N-terminal ectodomain); this interaction may be affected by IL6R-binding with SORL1, hence decreasing IL6 cis signaling. Interacts with SORL1 (via the N-terminal ectodomain); this interaction leads to IL6 internalization and lysosomal degradation. May form a trimeric complex with the soluble SORL1 ectodomain and soluble IL6R receptor; this interaction might stabilize circulating IL6, hence promoting IL6 trans signaling.

The protein localises to the secreted. Cytokine with a wide variety of biological functions in immunity, tissue regeneration, and metabolism. Binds to IL6R, then the complex associates to the signaling subunit IL6ST/gp130 to trigger the intracellular IL6-signaling pathway. The interaction with the membrane-bound IL6R and IL6ST stimulates 'classic signaling', whereas the binding of IL6 and soluble IL6R to IL6ST stimulates 'trans-signaling'. Alternatively, 'cluster signaling' occurs when membrane-bound IL6:IL6R complexes on transmitter cells activate IL6ST receptors on neighboring receiver cells. Functionally, IL6 is a potent inducer of the acute phase response. Rapid production of IL6 contributes to host defense during infection and tissue injury, but excessive IL6 synthesis is involved in disease pathology. In the innate immune response, is synthesized by myeloid cells, such as macrophages and dendritic cells, upon recognition of pathogens through toll-like receptors (TLRs) at the site of infection or tissue injury. In the adaptive immune response, is required for the differentiation of B cells into immunoglobulin-secreting cells. Plays a major role in the differentiation of CD4(+) T cell subsets. Essential factor for the development of T follicular helper (Tfh) cells that are required for the induction of germinal-center formation. Required to drive naive CD4(+) T cells to the Th17 lineage. Also required for proliferation of myeloma cells and the survival of plasmablast cells. In terms of biological role, acts as an essential factor in bone homeostasis and on vessels directly or indirectly by induction of VEGF, resulting in increased angiogenesis activity and vascular permeability. Induces, through 'trans-signaling' and synergistically with IL1B and TNF, the production of VEGF. Involved in metabolic controls, is discharged into the bloodstream after muscle contraction increasing lipolysis and improving insulin resistance. 'Trans-signaling' in central nervous system also regulates energy and glucose homeostasis. Mediates, through GLP-1, crosstalk between insulin-sensitive tissues, intestinal L cells and pancreatic islets to adapt to changes in insulin demand. Also acts as a myokine. Plays a protective role during liver injury, being required for maintenance of tissue regeneration. Also has a pivotal role in iron metabolism by regulating HAMP/hepcidin expression upon inflammation or bacterial infection. Through activation of IL6ST-YAP-NOTCH pathway, induces inflammation-induced epithelial regeneration. The chain is Interleukin-6 (IL6) from Saimiri sciureus (Common squirrel monkey).